A 335-amino-acid polypeptide reads, in one-letter code: MPQDIDFGLPAPAGISPGLEATRRHNLGWVRRLGLVGDGPSLAWYTSWDMPRLAACGFPHARGAALDLCADAMAFFFVFDDQFDGPLGRDPARAARVCRRLTGIVHGAGPGPGADACSAAFADVWARSTDGAHPGWVARTAHEWEYYFAAQAHEAINRLRGTPGDMESYLQVRRGIAGTDLPLSLGERAAGITVPAAAFHSPQLRIMREAAIDVTLMCNDVYSLEKEEARGDMDNLVLVIEHARRCTRDEAVTAARGEVARRVIRFEQLAREVPALCAQLGLSAVERAHVDTYLGVMEAWMSGYHAWQTQTRRYTGAPHVLPSTGPGYFDEVLPT.

Residues D80, D84, N219, S223, and E227 each contribute to the Mg(2+) site. The short motif at 80-84 (DDQFD) is the DDXXD motif element.

The protein belongs to the terpene synthase family. It depends on Mg(2+) as a cofactor.

It carries out the reaction (2E,6E)-farnesyl diphosphate + H2O = avermitilol + diphosphate. Its function is as follows. Catalyzes the cyclization of farnesyl diphosphate to avermitilol. This is Avermitilol synthase (tpc1) from Streptomyces avermitilis (strain ATCC 31267 / DSM 46492 / JCM 5070 / NBRC 14893 / NCIMB 12804 / NRRL 8165 / MA-4680).